The primary structure comprises 341 residues: MTEQALLLVNLGSPASTEVADVRRYLNQFLMDPYVVDLPWPLRRLLVSMILIKRPEQSAHAYASIWWPEGSPLVVLSRRLQEAVKPHWTKGPVELAMRYGEPSIEGALKRLAGQGITQVALAPLYPQFADSTTTTVIQEARRVIREHGLDLKLSILQPFYDQPEYLDALVASAMPHLQQGFDHLLLSFHGLPERHLHKSDPTGAHCLKGDDCCQRAEGAVLATCYRAQCIRTAEGFATRAGLRRDQWSVSFQSRLGRAKWIEPYTETRLDELAEQGVKKLLVMCPAFVSDCIETLEEIGDRGREQFIEAGGQELVLVPCLNTHEDWVQALVQLCSRAPQAL.

Positions 189 and 293 each coordinate Fe cation.

It belongs to the ferrochelatase family.

It localises to the cytoplasm. The catalysed reaction is heme b + 2 H(+) = protoporphyrin IX + Fe(2+). It participates in porphyrin-containing compound metabolism; protoheme biosynthesis; protoheme from protoporphyrin-IX: step 1/1. Functionally, catalyzes the ferrous insertion into protoporphyrin IX. This chain is Ferrochelatase, found in Stutzerimonas stutzeri (strain A1501) (Pseudomonas stutzeri).